The primary structure comprises 460 residues: UDP-N-acetylmuramate--L-alanine ligase (460 aa).

Position 119–125 (119–125 (GSHGKTT)) interacts with ATP.

The protein belongs to the MurCDEF family.

The protein localises to the cytoplasm. It catalyses the reaction UDP-N-acetyl-alpha-D-muramate + L-alanine + ATP = UDP-N-acetyl-alpha-D-muramoyl-L-alanine + ADP + phosphate + H(+). Its pathway is cell wall biogenesis; peptidoglycan biosynthesis. Functionally, cell wall formation. The protein is UDP-N-acetylmuramate--L-alanine ligase of Alkaliphilus metalliredigens (strain QYMF).